The sequence spans 954 residues: Glycine dehydrogenase (decarboxylating) (954 aa).

K704 bears the N6-(pyridoxal phosphate)lysine mark.

This sequence belongs to the GcvP family. The glycine cleavage system is composed of four proteins: P, T, L and H. Pyridoxal 5'-phosphate serves as cofactor.

The enzyme catalyses N(6)-[(R)-lipoyl]-L-lysyl-[glycine-cleavage complex H protein] + glycine + H(+) = N(6)-[(R)-S(8)-aminomethyldihydrolipoyl]-L-lysyl-[glycine-cleavage complex H protein] + CO2. The glycine cleavage system catalyzes the degradation of glycine. The P protein binds the alpha-amino group of glycine through its pyridoxal phosphate cofactor; CO(2) is released and the remaining methylamine moiety is then transferred to the lipoamide cofactor of the H protein. This chain is Glycine dehydrogenase (decarboxylating), found in Rhizobium etli (strain CIAT 652).